Here is a 328-residue protein sequence, read N- to C-terminus: Delta-aminolevulinic acid dehydratase (328 aa).

The Zn(2+) site is built by C122, C124, and C132. K197 acts as the Schiff-base intermediate with substrate in catalysis. 5-aminolevulinate contacts are provided by R207 and R219. E235 serves as a coordination point for Mg(2+). The active-site Schiff-base intermediate with substrate is K250. 5-aminolevulinate-binding residues include S276 and Y315.

Belongs to the ALAD family. In terms of assembly, homooctamer. Zn(2+) serves as cofactor.

It carries out the reaction 2 5-aminolevulinate = porphobilinogen + 2 H2O + H(+). Its pathway is porphyrin-containing compound metabolism; protoporphyrin-IX biosynthesis; coproporphyrinogen-III from 5-aminolevulinate: step 1/4. Catalyzes an early step in the biosynthesis of tetrapyrroles. Binds two molecules of 5-aminolevulinate per subunit, each at a distinct site, and catalyzes their condensation to form porphobilinogen. This chain is Delta-aminolevulinic acid dehydratase (hemB), found in Halalkalibacterium halodurans (strain ATCC BAA-125 / DSM 18197 / FERM 7344 / JCM 9153 / C-125) (Bacillus halodurans).